A 115-amino-acid polypeptide reads, in one-letter code: Ribonuclease P protein component (115 aa).

This sequence belongs to the RnpA family. In terms of assembly, consists of a catalytic RNA component (M1 or rnpB) and a protein subunit.

The catalysed reaction is Endonucleolytic cleavage of RNA, removing 5'-extranucleotides from tRNA precursor.. Functionally, RNaseP catalyzes the removal of the 5'-leader sequence from pre-tRNA to produce the mature 5'-terminus. It can also cleave other RNA substrates such as 4.5S RNA. The protein component plays an auxiliary but essential role in vivo by binding to the 5'-leader sequence and broadening the substrate specificity of the ribozyme. This Bacillus mycoides (strain KBAB4) (Bacillus weihenstephanensis) protein is Ribonuclease P protein component.